Reading from the N-terminus, the 446-residue chain is ATP-dependent protease ATPase subunit HslU (446 aa).

ATP contacts are provided by residues Val18, 60–65, Asp259, Glu324, and Arg396; that span reads GVGKTE.

This sequence belongs to the ClpX chaperone family. HslU subfamily. In terms of assembly, a double ring-shaped homohexamer of HslV is capped on each side by a ring-shaped HslU homohexamer. The assembly of the HslU/HslV complex is dependent on binding of ATP.

It localises to the cytoplasm. ATPase subunit of a proteasome-like degradation complex; this subunit has chaperone activity. The binding of ATP and its subsequent hydrolysis by HslU are essential for unfolding of protein substrates subsequently hydrolyzed by HslV. HslU recognizes the N-terminal part of its protein substrates and unfolds these before they are guided to HslV for hydrolysis. The chain is ATP-dependent protease ATPase subunit HslU from Dechloromonas aromatica (strain RCB).